Here is a 951-residue protein sequence, read N- to C-terminus: Valine--tRNA ligase (951 aa).

The 'HIGH' region motif lies at 42 to 52; sequence PNVTGSLHMGH. The short motif at 554 to 558 is the 'KMSKS' region element; it reads KMSKS. Lys557 is a binding site for ATP. The stretch at 880 to 944 forms a coiled coil; that stretch reads AGLINKEDEL…AEAKAKLIEQ (65 aa).

This sequence belongs to the class-I aminoacyl-tRNA synthetase family. ValS type 1 subfamily. In terms of assembly, monomer.

The protein resides in the cytoplasm. The catalysed reaction is tRNA(Val) + L-valine + ATP = L-valyl-tRNA(Val) + AMP + diphosphate. In terms of biological role, catalyzes the attachment of valine to tRNA(Val). As ValRS can inadvertently accommodate and process structurally similar amino acids such as threonine, to avoid such errors, it has a 'posttransfer' editing activity that hydrolyzes mischarged Thr-tRNA(Val) in a tRNA-dependent manner. The chain is Valine--tRNA ligase from Salmonella paratyphi A (strain ATCC 9150 / SARB42).